A 278-amino-acid polypeptide reads, in one-letter code: Soluble NSF attachment protein homolog FPV011 (278 aa).

This sequence belongs to the SNAP family.

This Fowlpox virus (strain NVSL) (FPV) protein is Soluble NSF attachment protein homolog FPV011.